A 425-amino-acid chain; its full sequence is Dihydroorotase (425 aa).

Zn(2+) contacts are provided by histidine 61 and histidine 63. Residues 63–65 and asparagine 95 contribute to the substrate site; that span reads HLR. Aspartate 153, histidine 180, and histidine 233 together coordinate Zn(2+). Asparagine 279 is a substrate binding site. Aspartate 306 provides a ligand contact to Zn(2+). Residue aspartate 306 is part of the active site. Substrate is bound at residue histidine 310.

It belongs to the metallo-dependent hydrolases superfamily. DHOase family. Class I DHOase subfamily. Zn(2+) serves as cofactor.

It catalyses the reaction (S)-dihydroorotate + H2O = N-carbamoyl-L-aspartate + H(+). It participates in pyrimidine metabolism; UMP biosynthesis via de novo pathway; (S)-dihydroorotate from bicarbonate: step 3/3. Its function is as follows. Catalyzes the reversible cyclization of carbamoyl aspartate to dihydroorotate. This chain is Dihydroorotase, found in Geobacter sp. (strain M21).